The following is a 425-amino-acid chain: UDP-N-acetylglucosamine 1-carboxyvinyltransferase (425 aa).

A phosphoenolpyruvate-binding site is contributed by 23–24 (KN). Arg100 provides a ligand contact to UDP-N-acetyl-alpha-D-glucosamine. Catalysis depends on Cys124, which acts as the Proton donor. Cys124 is subject to 2-(S-cysteinyl)pyruvic acid O-phosphothioketal. UDP-N-acetyl-alpha-D-glucosamine is bound by residues Asp313 and Ile335.

It belongs to the EPSP synthase family. MurA subfamily.

The protein resides in the cytoplasm. The catalysed reaction is phosphoenolpyruvate + UDP-N-acetyl-alpha-D-glucosamine = UDP-N-acetyl-3-O-(1-carboxyvinyl)-alpha-D-glucosamine + phosphate. Its pathway is cell wall biogenesis; peptidoglycan biosynthesis. In terms of biological role, cell wall formation. Adds enolpyruvyl to UDP-N-acetylglucosamine. The chain is UDP-N-acetylglucosamine 1-carboxyvinyltransferase from Wolbachia pipientis wMel.